The primary structure comprises 1287 residues: Rho GTPase-activating protein 33 (1287 aa).

The segment at methionine 1 to arginine 40 is disordered. The residue at position 8 (serine 8) is a Phosphoserine. One can recognise a PX; atypical domain in the interval phenylalanine 59–leucine 168. An SH3 domain is found at proline 186–glutamate 248. One can recognise a Rho-GAP domain in the interval cysteine 315 to phenylalanine 510. Disordered stretches follow at residues arginine 551–alanine 792, alanine 813–leucine 832, lysine 859–proline 1030, glycine 1056–proline 1075, glycine 1090–phenylalanine 1134, and proline 1146–cysteine 1287. Low complexity predominate over residues threonine 558–proline 571. A Phosphoserine modification is found at serine 570. Over residues alanine 572–arginine 584 the composition is skewed to basic and acidic residues. Residues serine 622–serine 645 show a composition bias toward polar residues. Serine 636 is modified (phosphoserine). Positions alanine 672–serine 709 are enriched in low complexity. Residue serine 727 is modified to Phosphoserine. Pro residues predominate over residues proline 752–proline 766. Low complexity-rich tracts occupy residues alanine 813–glycine 829 and proline 896–glutamate 919. Polar residues-rich tracts occupy residues arginine 972–arginine 981 and serine 1019–proline 1028. Residue tyrosine 1169 is modified to Phosphotyrosine. Residues glycine 1175–proline 1189 show a composition bias toward low complexity. Arginine 1244 carries the omega-N-methylarginine modification. Over residues serine 1274–cysteine 1287 the composition is skewed to polar residues.

It belongs to the PX domain-containing GAP family. As to quaternary structure, specifically interacts with CDC42 and RHOQ/TC10 through its Rho-GAP domain. Interacts with NEK6.

In terms of biological role, may be involved in several stages of intracellular trafficking. Could play an important role in the regulation of glucose transport by insulin. May act as a downstream effector of RHOQ/TC10 in the regulation of insulin-stimulated glucose transport. The protein is Rho GTPase-activating protein 33 (ARHGAP33) of Homo sapiens (Human).